The chain runs to 73 residues: Putative membrane protein insertion efficiency factor (73 aa).

This sequence belongs to the UPF0161 family.

The protein resides in the cell inner membrane. Functionally, could be involved in insertion of integral membrane proteins into the membrane. The protein is Putative membrane protein insertion efficiency factor of Rickettsia bellii (strain OSU 85-389).